We begin with the raw amino-acid sequence, 418 residues long: Tyrosine--tRNA ligase (418 aa).

Y38 lines the L-tyrosine pocket. A 'HIGH' region motif is present at residues 43 to 52 (CTARSLHIGS). L-tyrosine contacts are provided by Y175 and Q179. Positions 235 to 239 (KMGKT) match the 'KMSKS' region motif. Position 238 (K238) interacts with ATP. Residues 348–413 (LSVVKLLQVS…CGKKRHLKVV (66 aa)) form the S4 RNA-binding domain.

This sequence belongs to the class-I aminoacyl-tRNA synthetase family. TyrS type 1 subfamily. As to quaternary structure, homodimer.

Its subcellular location is the cytoplasm. It catalyses the reaction tRNA(Tyr) + L-tyrosine + ATP = L-tyrosyl-tRNA(Tyr) + AMP + diphosphate + H(+). Functionally, catalyzes the attachment of tyrosine to tRNA(Tyr) in a two-step reaction: tyrosine is first activated by ATP to form Tyr-AMP and then transferred to the acceptor end of tRNA(Tyr). In Ehrlichia ruminantium (strain Welgevonden), this protein is Tyrosine--tRNA ligase.